The primary structure comprises 106 residues: Thioredoxin-like protein YdbP (106 aa).

Residues 1-106 enclose the Thioredoxin domain; that stretch reads MKKITTNEQF…VTEFLSEHIS (106 aa). C29 and C32 are oxidised to a cystine.

It belongs to the thioredoxin family.

Participates in various redox reactions through the reversible oxidation of its active center dithiol to a disulfide and catalyzes dithiol-disulfide exchange reactions. The chain is Thioredoxin-like protein YdbP (ydbP) from Bacillus subtilis (strain 168).